A 690-amino-acid polypeptide reads, in one-letter code: Putative glycerophosphocholine phosphodiesterase GPCPD1 homolog 1 (690 aa).

Residues 1 to 122 (MDQDYKAHFK…RKNITDQFGS (122 aa)) enclose the CBM20 domain. The 311-residue stretch at 344-654 (MLQIGHRGMG…DRIGEDEVLK (311 aa)) folds into the GP-PDE domain. The interval 670 to 690 (ARSQHNSRSPSMSRRCMSTVE) is disordered. A compositionally biased stretch (low complexity) spans 676–690 (SRSPSMSRRCMSTVE).

Belongs to the glycerophosphoryl diester phosphodiesterase family.

The sequence is that of Putative glycerophosphocholine phosphodiesterase GPCPD1 homolog 1 from Caenorhabditis elegans.